The sequence spans 475 residues: Ribulose bisphosphate carboxylase large chain (475 aa).

A propeptide spanning residues 1-2 (MS) is cleaved from the precursor. P3 is subject to N-acetylproline. Residue K14 is modified to N6,N6,N6-trimethyllysine. Residues N123 and T173 each contribute to the substrate site. Residue K175 is the Proton acceptor of the active site. A substrate-binding site is contributed by K177. Positions 201, 203, and 204 each coordinate Mg(2+). The residue at position 201 (K201) is an N6-carboxylysine. The active-site Proton acceptor is H294. 3 residues coordinate substrate: R295, H327, and S379.

It belongs to the RuBisCO large chain family. Type I subfamily. Heterohexadecamer of 8 large chains and 8 small chains; disulfide-linked. The disulfide link is formed within the large subunit homodimers. Mg(2+) is required as a cofactor. In terms of processing, the disulfide bond which can form in the large chain dimeric partners within the hexadecamer appears to be associated with oxidative stress and protein turnover.

The protein resides in the plastid. It localises to the chloroplast. It carries out the reaction 2 (2R)-3-phosphoglycerate + 2 H(+) = D-ribulose 1,5-bisphosphate + CO2 + H2O. The catalysed reaction is D-ribulose 1,5-bisphosphate + O2 = 2-phosphoglycolate + (2R)-3-phosphoglycerate + 2 H(+). Its function is as follows. RuBisCO catalyzes two reactions: the carboxylation of D-ribulose 1,5-bisphosphate, the primary event in carbon dioxide fixation, as well as the oxidative fragmentation of the pentose substrate in the photorespiration process. Both reactions occur simultaneously and in competition at the same active site. The chain is Ribulose bisphosphate carboxylase large chain from Illicium oligandrum (Star anise).